The chain runs to 259 residues: MPVVTMKQLLEAGVHFGHRTQRWNPKMKPYIYGARKGIYIIDLQKTVKLIDEAYDFVRDVASKGGTILFVGTKKQAQQVVKNEAERCGGFYVNNRWLGGLLTNFQTIQSRIQRLIELEEMEANGELDKLPKKEQSKLRKTLEKLRKNLGGLKNMRGLPDVIFVVDPRKEKIAVEEANYLGIPIVAMVDTNCDPDPIDYVIPSNDDAIRAIALIASKIADAYLEGREGVPYSSEEAAAQPEEKIEEIEINIPEGIGEEEI.

It belongs to the universal ribosomal protein uS2 family.

In Fervidobacterium nodosum (strain ATCC 35602 / DSM 5306 / Rt17-B1), this protein is Small ribosomal subunit protein uS2.